We begin with the raw amino-acid sequence, 204 residues long: UPF0637 protein lin1053 (204 aa).

The protein belongs to the UPF0637 family.

This chain is UPF0637 protein lin1053, found in Listeria innocua serovar 6a (strain ATCC BAA-680 / CLIP 11262).